The chain runs to 78 residues: MAGRKGGRAKRRKVCYFTANGITHIDYKDVDLLKKFISERGKILPRRVTGTSAKYQRKLTVAIKRARQMALLPYVADE.

The protein belongs to the bacterial ribosomal protein bS18 family. Part of the 30S ribosomal subunit. Forms a tight heterodimer with protein bS6.

In terms of biological role, binds as a heterodimer with protein bS6 to the central domain of the 16S rRNA, where it helps stabilize the platform of the 30S subunit. This chain is Small ribosomal subunit protein bS18, found in Geobacillus sp. (strain WCH70).